Reading from the N-terminus, the 724-residue chain is Pre-mRNA-splicing factor CLF1 (724 aa).

HAT repeat units follow at residues 55-87 (EFQA…WEAS), 89-121 (NEYE…MELK), 123-155 (RNIN…LEEL), 157-188 (LNVS…LEER), 190-221 (NELD…FEED), 223-262 (GQPD…METR), 264-298 (KEFE…FEKQ), 308-340 (TVLG…LEED), 352-386 (VEPM…LWLQ), 396-432 (KDYD…FEIR), 434-465 (LDVS…LEMR), 467-499 (REFD…VESA), 501-534 (EDFE…FEAG), 536-567 (GERE…MEIA), 585-626 (GDAD…EHGD), and 635-667 (DMLP…DDEK). A disordered region spans residues 681 to 724 (QAWAQQRAGQGEEGGLSYDLPSDSESENEDEDGDNREEEGMDQD). Residues 702-724 (SDSESENEDEDGDNREEEGMDQD) show a composition bias toward acidic residues.

The protein belongs to the crooked-neck family. In terms of assembly, associated with the spliceosome.

It is found in the nucleus. In terms of biological role, involved in pre-mRNA splicing and cell cycle progression. Required for the spliceosome assembly and initiation of the DNA replication. This chain is Pre-mRNA-splicing factor CLF1 (CLF1), found in Cryptococcus neoformans var. grubii serotype A (strain H99 / ATCC 208821 / CBS 10515 / FGSC 9487) (Filobasidiella neoformans var. grubii).